A 518-amino-acid polypeptide reads, in one-letter code: Probable Xaa-Pro aminopeptidase HCDG_07916 (518 aa).

Aspartate 289, aspartate 300, glutamate 437, and glutamate 475 together coordinate Mn(2+).

It belongs to the peptidase M24B family. Mn(2+) is required as a cofactor.

It catalyses the reaction Release of any N-terminal amino acid, including proline, that is linked to proline, even from a dipeptide or tripeptide.. Catalyzes the removal of a penultimate prolyl residue from the N-termini of peptides. In Ajellomyces capsulatus (strain H143) (Darling's disease fungus), this protein is Probable Xaa-Pro aminopeptidase HCDG_07916.